Consider the following 181-residue polypeptide: MSFVPEKVFFTKGVGRHKEYLSSFELALRDAKIEKCNLVTVSSIFPPKCERLSVEEGLKRLSPGEITFAVMARNSTNEHNRLIASSIGVALPADESLYGYLSEHHPYGQTSEQSGEYAEDLAATMLATTLGIEFDPNKDWDEREGIYKMSGKIINSFNITQSAEGEDGLWTTVIACAVLLP.

Residue S43 is modified to Pyruvic acid (Ser).

Belongs to the PdaD family. It depends on pyruvate as a cofactor.

The enzyme catalyses L-arginine + H(+) = agmatine + CO2. This Chlorobium phaeobacteroides (strain BS1) protein is Probable pyruvoyl-dependent arginine decarboxylase.